We begin with the raw amino-acid sequence, 428 residues long: Glutamate-1-semialdehyde 2,1-aminomutase (428 aa).

Lys-267 is subject to N6-(pyridoxal phosphate)lysine.

The protein belongs to the class-III pyridoxal-phosphate-dependent aminotransferase family. HemL subfamily. Homodimer. The cofactor is pyridoxal 5'-phosphate.

The protein localises to the cytoplasm. The catalysed reaction is (S)-4-amino-5-oxopentanoate = 5-aminolevulinate. The protein operates within porphyrin-containing compound metabolism; protoporphyrin-IX biosynthesis; 5-aminolevulinate from L-glutamyl-tRNA(Glu): step 2/2. The polypeptide is Glutamate-1-semialdehyde 2,1-aminomutase (Trichlorobacter lovleyi (strain ATCC BAA-1151 / DSM 17278 / SZ) (Geobacter lovleyi)).